Here is a 70-residue protein sequence, read N- to C-terminus: ATP synthase subunit c (70 aa).

A run of 2 helical transmembrane segments spans residues 4–24 (IASA…NGLI) and 47–67 (FVGV…AFMV).

This sequence belongs to the ATPase C chain family. As to quaternary structure, F-type ATPases have 2 components, F(1) - the catalytic core - and F(0) - the membrane proton channel. F(1) has five subunits: alpha(3), beta(3), gamma(1), delta(1), epsilon(1). F(0) has three main subunits: a(1), b(2) and c(10-14). The alpha and beta chains form an alternating ring which encloses part of the gamma chain. F(1) is attached to F(0) by a central stalk formed by the gamma and epsilon chains, while a peripheral stalk is formed by the delta and b chains.

The protein localises to the cell membrane. Its function is as follows. F(1)F(0) ATP synthase produces ATP from ADP in the presence of a proton or sodium gradient. F-type ATPases consist of two structural domains, F(1) containing the extramembraneous catalytic core and F(0) containing the membrane proton channel, linked together by a central stalk and a peripheral stalk. During catalysis, ATP synthesis in the catalytic domain of F(1) is coupled via a rotary mechanism of the central stalk subunits to proton translocation. Key component of the F(0) channel; it plays a direct role in translocation across the membrane. A homomeric c-ring of between 10-14 subunits forms the central stalk rotor element with the F(1) delta and epsilon subunits. In Priestia megaterium (strain ATCC 12872 / QMB1551) (Bacillus megaterium), this protein is ATP synthase subunit c.